The chain runs to 106 residues: MEKKHIYLFCSAGMSTSLLVSKMRAQAEKYEVPVIIEAFPETLAGEKGQNADVVLLGPQIAYMLPEIQRLLPNKPVEVIDSLLYGKVDGLGVLKAAVAAIKKAAAN.

A PTS EIIB type-3 domain is found at 3-106 (KKHIYLFCSA…VAAIKKAAAN (104 aa)). Cys10 functions as the Phosphocysteine intermediate in the catalytic mechanism. Phosphocysteine; by EIIA is present on Cys10.

In terms of assembly, forms a complex with ChbA (EIIA). ChbB is a monomer in both its unphosphorylated and phosphorylated forms.

The protein localises to the cytoplasm. It carries out the reaction N,N'-diacetylchitobiose(out) + N(pros)-phospho-L-histidyl-[protein] = diacetylchitobiose-6'-phosphate(in) + L-histidyl-[protein]. Its function is as follows. The phosphoenolpyruvate-dependent sugar phosphotransferase system (sugar PTS), a major carbohydrate active transport system, catalyzes the phosphorylation of incoming sugar substrates concomitantly with their translocation across the cell membrane. The enzyme II ChbABC PTS system is involved in the transport of the chitin disaccharide N,N'-diacetylchitobiose (GlcNAc2). The sequence is that of PTS system N,N'-diacetylchitobiose-specific EIIB component (chbB) from Escherichia coli O157:H7.